Consider the following 170-residue polypeptide: Cyclic pyranopterin monophosphate synthase (170 aa).

Positions 1 to 25 (MADPSTLTHPDPEGGVRMMDASQKS) are disordered. Substrate contacts are provided by residues 78–80 (LCH) and 116–117 (ME). Residue Asp131 is part of the active site.

It belongs to the MoaC family. As to quaternary structure, homohexamer; trimer of dimers.

The catalysed reaction is (8S)-3',8-cyclo-7,8-dihydroguanosine 5'-triphosphate = cyclic pyranopterin phosphate + diphosphate. It participates in cofactor biosynthesis; molybdopterin biosynthesis. In terms of biological role, catalyzes the conversion of (8S)-3',8-cyclo-7,8-dihydroguanosine 5'-triphosphate to cyclic pyranopterin monophosphate (cPMP). In Salinibacter ruber (strain DSM 13855 / M31), this protein is Cyclic pyranopterin monophosphate synthase.